The primary structure comprises 245 residues: 1-(5-phosphoribosyl)-5-[(5-phosphoribosylamino)methylideneamino] imidazole-4-carboxamide isomerase (245 aa).

Aspartate 7 serves as the catalytic Proton acceptor. Residue aspartate 129 is the Proton donor of the active site.

It belongs to the HisA/HisF family.

Its subcellular location is the cytoplasm. The enzyme catalyses 1-(5-phospho-beta-D-ribosyl)-5-[(5-phospho-beta-D-ribosylamino)methylideneamino]imidazole-4-carboxamide = 5-[(5-phospho-1-deoxy-D-ribulos-1-ylimino)methylamino]-1-(5-phospho-beta-D-ribosyl)imidazole-4-carboxamide. The protein operates within amino-acid biosynthesis; L-histidine biosynthesis; L-histidine from 5-phospho-alpha-D-ribose 1-diphosphate: step 4/9. The chain is 1-(5-phosphoribosyl)-5-[(5-phosphoribosylamino)methylideneamino] imidazole-4-carboxamide isomerase from Escherichia coli O7:K1 (strain IAI39 / ExPEC).